The sequence spans 327 residues: Aquaporin-1 (327 aa).

The interval Met-1–Lys-34 is disordered. Residues Met-1–His-48 are Cytoplasmic-facing. A helical transmembrane segment spans residues Phe-49–Ile-69. The Extracellular portion of the chain corresponds to Cys-70–Leu-91. Residues Ile-92–Val-112 form a helical membrane-spanning segment. The Cytoplasmic segment spans residues Ser-113–Cys-136. An NPA 1 motif is present at residues Asn-118 to Ala-120. A helical membrane pass occupies residues Val-137–Met-157. Residues Thr-158–Arg-176 lie on the Extracellular side of the membrane. A helical transmembrane segment spans residues Gly-177–Val-197. Residues Glu-198–Asn-203 are Cytoplasmic-facing. The helical transmembrane segment at Phe-204–Tyr-224 threads the bilayer. The Extracellular portion of the chain corresponds to Thr-225–His-248. The short motif at Asn-230–Ala-232 is the NPA 2 element. Residues Trp-249–Leu-269 form a helical membrane-spanning segment. Topologically, residues Gln-270–Asn-327 are cytoplasmic.

Belongs to the MIP/aquaporin (TC 1.A.8) family.

The protein resides in the endoplasmic reticulum membrane. The protein localises to the cell membrane. Water channel required to facilitate the transport of water across membranes. Involved in sporulation, freeze tolerance and osmotolerance. Is non-functional in most laboratory strains. The chain is Aquaporin-1 (AQY1) from Saccharomyces cerevisiae (Baker's yeast).